A 268-amino-acid chain; its full sequence is 14-3-3-like protein GF14 upsilon (268 aa).

Residues Ser69 and Ser192 each carry the phosphoserine modification. Residue Thr213 is modified to Phosphothreonine. The segment at 243-268 is disordered; the sequence is EAGDDIKEAPKEVQKVDEQAQPPPSQ. The segment covering 246 to 260 has biased composition (basic and acidic residues); sequence DDIKEAPKEVQKVDE. Ser267 carries the phosphoserine modification.

Belongs to the 14-3-3 family. In terms of assembly, interacts with EDE1. Interacts with DREB1A and DREB1B in the nucleus. Interacts with CINV1.

It is found in the cytoplasm. The protein localises to the nucleus. Its function is as follows. Is associated with a DNA binding complex that binds to the G box, a well-characterized cis-acting DNA regulatory element found in plant genes. May be involved in cell cycle regulation by binding to soluble EDE1 and sequestering it in an inactive form during the early stages of mitosis. The chain is 14-3-3-like protein GF14 upsilon (GRF5) from Arabidopsis thaliana (Mouse-ear cress).